The primary structure comprises 51 residues: Mating pheromone Er-23 (51 aa).

Intrachain disulfides connect C3-C24, C6-C16, C13-C47, C27-C40, and C35-C51.

Its subcellular location is the secreted. In terms of biological role, mating ciliate pheromones (or gamones) are diffusible extracellular communication signals that distinguish different intraspecific classes of cells commonly referred to as 'mating types'. They prepare the latter for conjugation by changing their cell surface properties. This chain is Mating pheromone Er-23 (MAT23), found in Euplotes raikovi.